Reading from the N-terminus, the 143-residue chain is Transcriptional regulator MraZ (143 aa).

SpoVT-AbrB domains follow at residues 5-47 (EYQH…PKDE) and 76-119 (AIES…SKDN).

Belongs to the MraZ family. As to quaternary structure, forms oligomers.

It is found in the cytoplasm. The protein resides in the nucleoid. This chain is Transcriptional regulator MraZ, found in Oenococcus oeni (strain ATCC BAA-331 / PSU-1).